The sequence spans 637 residues: 1-deoxy-D-xylulose-5-phosphate synthase (637 aa).

Residues His-82 and 123–125 contribute to the thiamine diphosphate site; that span reads GHA. Residue Asp-154 participates in Mg(2+) binding. Thiamine diphosphate is bound by residues 155–156, Asn-183, Tyr-295, and Glu-378; that span reads GS. Asn-183 provides a ligand contact to Mg(2+).

It belongs to the transketolase family. DXPS subfamily. Homodimer. The cofactor is Mg(2+). Thiamine diphosphate serves as cofactor.

It carries out the reaction D-glyceraldehyde 3-phosphate + pyruvate + H(+) = 1-deoxy-D-xylulose 5-phosphate + CO2. Its pathway is metabolic intermediate biosynthesis; 1-deoxy-D-xylulose 5-phosphate biosynthesis; 1-deoxy-D-xylulose 5-phosphate from D-glyceraldehyde 3-phosphate and pyruvate: step 1/1. Catalyzes the acyloin condensation reaction between C atoms 2 and 3 of pyruvate and glyceraldehyde 3-phosphate to yield 1-deoxy-D-xylulose-5-phosphate (DXP). This Lawsonia intracellularis (strain PHE/MN1-00) protein is 1-deoxy-D-xylulose-5-phosphate synthase.